A 97-amino-acid polypeptide reads, in one-letter code: YcgL domain-containing protein PFL_1496 (97 aa).

Positions 3 to 87 (RICSIYKSPR…AEDEYIEHLP (85 aa)) constitute a YcgL domain.

This chain is YcgL domain-containing protein PFL_1496, found in Pseudomonas fluorescens (strain ATCC BAA-477 / NRRL B-23932 / Pf-5).